The primary structure comprises 424 residues: Inhibin beta A chain (424 aa).

The N-terminal stretch at 1–20 is a signal peptide; it reads MPLLWLRGFLLASCWIIVRS. Positions 21-308 are excised as a propeptide; the sequence is SPTPGSGGHS…EEHPHRRRRR (288 aa). Residue Asn-165 is glycosylated (N-linked (GlcNAc...) asparagine). 2 disordered regions span residues 178–197 and 259–306; these read QQRR…DVGF and KKKK…HRRR. Acidic residues predominate over residues 188-197; it reads AGEEAEDVGF. Residues 263–275 show a composition bias toward basic and acidic residues; that stretch reads KEEEAEGRKRDGE. 4 cysteine pairs are disulfide-bonded: Cys-312/Cys-320, Cys-319/Cys-389, Cys-348/Cys-421, and Cys-352/Cys-423.

The protein belongs to the TGF-beta family. In terms of assembly, dimeric, linked by one or more disulfide bonds. Inhibin A is a dimer of alpha/INHA and beta-A/INHBA. Activin A is a homodimer of beta-A/INHBA. Activin AB is a dimer of beta-A/INHBA and beta-B/INHBB. Interacts with FST and FSTL3; these interactions prevent activin A interaction to its type II receptor. Activin A interacts with ACVR2A. Activin A interacts with BMPR2. Inhibin A interacts with ACVR1; this interaction creates a non-signaling complex (NSC) that inhibits ACVR1-mediated BMP signaling. Inhibin A interacts with ACVR2A.

Its subcellular location is the secreted. Functionally, inhibins/activins are involved in regulating a number of diverse functions such as hypothalamic and pituitary hormone secretion, gonadal hormone secretion, germ cell development and maturation, erythroid differentiation, insulin secretion, nerve cell survival, embryonic axial development or bone growth, depending on their subunit composition. In terms of biological role, activin A is a homodimer of INHBA that plays a role in several essential biological processes including embryonic development, stem cell maintenance and differentiation, haematopoiesis, cell proliferation and tissue fibrosis. Signals through type I (such as ACVR1B or ACVR1C) and type II receptors (such as ACVR2A, ACVR2B or BMPR2) which, upon ligand binding, phosphorylate SMAD2 and SMAD3 intracellular signaling mediators that form a complex with SMAD4, translocate to the nucleus and modulate gene expression. Can also activate alternative non-canonical intracellular signaling pathways including the p38 MAPK, extracellular signal-regulated kinases 1/2 (ERK1/2) and c-Jun N-terminal kinases (JNKs) to modulate cell migration and differentiation. Alternatively, promotes osteoblastic differentiation via ACVRL1-SMAD1/5/9 pathway. In addition, can engage the type I receptor ACVR1 to form an ACVR1-activin A-type II receptor non-signaling complex (NSC) that renders receptors unavailable for engagement with BMPs, hence resulting in an apparent inhibition of ACVR1-mediated BMP signaling. Its function is as follows. Inhibin A is a dimer of alpha/INHA and beta-A/INHBA that functions as a feedback regulator in the hypothalamic-pituitary-gonadal (HPG) axis. Inhibits the secretion of FSH from the anterior pituitary gland by acting on pituitary gonadotrope cells. Antagonizes activin A by binding to the proteoglycan, betaglycan, and forming a stable complex with and, thereby, sequestering type II activin receptors while excluding type I receptor. The chain is Inhibin beta A chain (INHBA) from Sus scrofa (Pig).